The following is a 310-amino-acid chain: Protein OS-9 homolog (310 aa).

A signal peptide spans 1-40 (MFSSSMFPHLILPAIGSSKVRTMVLPFAFVGFFIFPICLA). N-linked (GlcNAc...) asparagine glycosylation is found at Asn60, Asn97, and Asn104. Positions 129 to 255 (NVFLIENRGY…TIHVPGLCSL (127 aa)) constitute an MRH domain. Positions 139 and 151 each coordinate a mannooligosaccharide derivative. N-linked (GlcNAc...) asparagine glycosylation is present at Asn204. 2 cysteine pairs are disulfide-bonded: Cys208/Cys241 and Cys223/Cys253. A mannooligosaccharide derivative is bound by residues Asp209, Arg215, Glu237, and Tyr243. 2 stretches are compositionally biased toward basic and acidic residues: residues 282-292 (VDHKDSQHVVD) and 301-310 (EVKEVETQSS). The disordered stretch occupies residues 282-310 (VDHKDSQHVVDEVAQTSPPEVKEVETQSS).

Belongs to the OS-9 family. Interacts with missfolded ER lumenal proteins.

The protein resides in the endoplasmic reticulum membrane. In terms of biological role, lectin involved in the quality control of the secretory pathway. As a member of the endoplasmic reticulum-associated degradation lumenal (ERAD-L) surveillance system, targets misfolded endoplasmic reticulum lumenal glycoproteins for degradation. This is Protein OS-9 homolog (yos9) from Schizosaccharomyces pombe (strain 972 / ATCC 24843) (Fission yeast).